The following is a 677-amino-acid chain: Potassium channel KAT1 (677 aa).

The Cytoplasmic segment spans residues 1–63 (MSISWTRNFF…PFNPRYRAWE (63 aa)). Residues 64–84 (MWLVLLVIYSAWICPFQFAFI) form a helical membrane-spanning segment. Topologically, residues 85–90 (TYKKDA) are extracellular. A helical membrane pass occupies residues 91–111 (IFIIDNIVNGFFAIDIILTFF). Residues 112–134 (VAYLDSHSYLLVDSPKKIAIRYL) lie on the Cytoplasmic side of the membrane. The chain crosses the membrane as a helical span at residues 135-155 (STWFAFDVCSTAPFQPLSLLF). Over 156 to 165 (NYNGSELGFR) the chain is Extracellular. Residues 166-186 (ILSMLRLWRLRRVSSLFARLE) form a helical; Voltage-sensor membrane-spanning segment. Over 187 to 200 (KDIRFNYFWIRCTK) the chain is Cytoplasmic. A helical transmembrane segment spans residues 201 to 221 (LISVTLFAIHCAGCFNYLIAD). Topologically, residues 222–248 (RYPNPRKTWIGAVYPNFKEASLWNRYV) are extracellular. Positions 249 to 268 (TALYWSITTLTTTGYGDFHA) form an intramembrane region, pore-forming. Topologically, residues 269-272 (ENPR) are extracellular. Residues 273-293 (EMLFDIFFMMFNLGLTAYLIG) form a helical membrane-spanning segment. Residues 294-677 (NMTNLVVHWT…DGDHLYFSSN (384 aa)) lie on the Cytoplasmic side of the membrane. 377–496 (LFQGVSRNFL…RVIMNNLFMK (120 aa)) is a binding site for a nucleoside 3',5'-cyclic phosphate. The segment covering 568 to 577 (IERAKVERSS) has biased composition (basic and acidic residues). A disordered region spans residues 568-601 (IERAKVERSSSETAGRSYANDSSKKDPYCSSSNQ). Residues 612–677 (RVTIHMMSES…DGDHLYFSSN (66 aa)) enclose the KHA domain.

It belongs to the potassium channel family. Plant (TC 1.A.1.4) subfamily. As to quaternary structure, the potassium channel is probably composed of a homo- or heterotetrameric complex of pore-forming subunits. May interact with AKT2 and KAT2. Interacts with SLAC1 and SLAH3. As to expression, expressed in guard cells, and in roots.

The protein localises to the membrane. Functionally, highly selective inward-rectifying potassium channel. This voltage-gated channel could mediate long-term potassium influx into guard cells leading to stomatal opening. Assuming opened or closed conformations in response to the voltage difference across the membrane, the channel is activated by hyperpolarization. The channel activity is enhanced upon external acidification. Also permeable to ammonium ions. Blocked by tetraethylammonium and barium ions. The chain is Potassium channel KAT1 (KAT1) from Arabidopsis thaliana (Mouse-ear cress).